We begin with the raw amino-acid sequence, 248 residues long: Probable transcriptional regulatory protein R02753 (248 aa).

This sequence belongs to the TACO1 family.

The protein resides in the cytoplasm. The polypeptide is Probable transcriptional regulatory protein R02753 (Rhizobium meliloti (strain 1021) (Ensifer meliloti)).